The sequence spans 640 residues: UvrABC system protein C (640 aa).

A GIY-YIG domain is found at 35–113 (DAPGVYRMIG…IKQLKPRFNV (79 aa)). The UVR domain occupies 223–258 (RAVMATMAKAMEEAAEELEFERAARLRDRIRALSAV).

Belongs to the UvrC family. As to quaternary structure, interacts with UvrB in an incision complex.

It is found in the cytoplasm. The UvrABC repair system catalyzes the recognition and processing of DNA lesions. UvrC both incises the 5' and 3' sides of the lesion. The N-terminal half is responsible for the 3' incision and the C-terminal half is responsible for the 5' incision. In Caulobacter vibrioides (strain ATCC 19089 / CIP 103742 / CB 15) (Caulobacter crescentus), this protein is UvrABC system protein C.